We begin with the raw amino-acid sequence, 139 residues long: Serpin-like protein HMSD (139 aa).

The first 20 residues, 1–20 (MSISSALAMVFMGAKGNTAA), serve as a signal peptide directing secretion. The N-linked (GlcNAc...) asparagine glycan is linked to N50.

The protein belongs to the serpin family. In terms of tissue distribution, highly expressed in dendritic cells and primary leukemia cells, especially those of myeloid lineage.

The protein resides in the secreted. Putative serine protease inhibitor. The sequence is that of Serpin-like protein HMSD (HMSD) from Homo sapiens (Human).